Reading from the N-terminus, the 309-residue chain is Protein FdhE homolog (309 aa).

The tract at residues 1-22 is disordered; sequence MSIRIVPQEQLEQNGKSTPEGH.

The protein belongs to the FdhE family.

It localises to the cytoplasm. In terms of biological role, necessary for formate dehydrogenase activity. In Pectobacterium carotovorum subsp. carotovorum (strain PC1), this protein is Protein FdhE homolog.